The primary structure comprises 246 residues: DNA repair protein RecO (246 aa).

The protein belongs to the RecO family.

Its function is as follows. Involved in DNA repair and RecF pathway recombination. In Methylorubrum extorquens (strain PA1) (Methylobacterium extorquens), this protein is DNA repair protein RecO.